The following is an 89-amino-acid chain: Small ribosomal subunit protein uS14A (89 aa).

The protein belongs to the universal ribosomal protein uS14 family. In terms of assembly, part of the 30S ribosomal subunit. Contacts proteins S3 and S10.

Binds 16S rRNA, required for the assembly of 30S particles and may also be responsible for determining the conformation of the 16S rRNA at the A site. The polypeptide is Small ribosomal subunit protein uS14A (Listeria monocytogenes serotype 4b (strain F2365)).